A 172-amino-acid polypeptide reads, in one-letter code: Ribosome maturation factor RimM (172 aa).

Residues 96–168 (DGEFYYHEII…RVQVELMEGL (73 aa)) form the PRC barrel domain.

Belongs to the RimM family. In terms of assembly, binds ribosomal protein uS19.

It is found in the cytoplasm. In terms of biological role, an accessory protein needed during the final step in the assembly of 30S ribosomal subunit, possibly for assembly of the head region. Essential for efficient processing of 16S rRNA. May be needed both before and after RbfA during the maturation of 16S rRNA. It has affinity for free ribosomal 30S subunits but not for 70S ribosomes. This is Ribosome maturation factor RimM from Streptococcus agalactiae serotype III (strain NEM316).